A 107-amino-acid chain; its full sequence is Nucleoid-associated protein RT0857 (107 aa).

The protein belongs to the YbaB/EbfC family. As to quaternary structure, homodimer.

The protein resides in the cytoplasm. It localises to the nucleoid. Functionally, binds to DNA and alters its conformation. May be involved in regulation of gene expression, nucleoid organization and DNA protection. This chain is Nucleoid-associated protein RT0857, found in Rickettsia typhi (strain ATCC VR-144 / Wilmington).